Consider the following 226-residue polypeptide: PKHD-type hydroxylase Sde_2812 (226 aa).

Residues 78 to 178 (KIFPPLFNCY…RLASFFWLQS (101 aa)) form the Fe2OG dioxygenase domain. His96, Asp98, and His159 together coordinate Fe cation. Arg169 contributes to the 2-oxoglutarate binding site.

Requires Fe(2+) as cofactor. L-ascorbate is required as a cofactor.

This Saccharophagus degradans (strain 2-40 / ATCC 43961 / DSM 17024) protein is PKHD-type hydroxylase Sde_2812.